Consider the following 122-residue polypeptide: Large ribosomal subunit protein uL14 (122 aa).

The protein belongs to the universal ribosomal protein uL14 family. In terms of assembly, part of the 50S ribosomal subunit. Forms a cluster with proteins L3 and L19. In the 70S ribosome, L14 and L19 interact and together make contacts with the 16S rRNA in bridges B5 and B8.

Functionally, binds to 23S rRNA. Forms part of two intersubunit bridges in the 70S ribosome. The chain is Large ribosomal subunit protein uL14 from Geotalea daltonii (strain DSM 22248 / JCM 15807 / FRC-32) (Geobacter daltonii).